Here is a 283-residue protein sequence, read N- to C-terminus: MILKDLLIEGYGVLKKASIGSYQIDAQLLLGKVLKKDRLFILTNPDYHIKEEEKEKYFQLIDLRKNKMPIKYILGTTEFMGLNFNIKKGVLIPRPDTEILVETVLEEIKNKNYKQICDVCCGSGIIGITIGYTLNNTEIICYDIEDIPYNTTKENILKHNLQDRVKALKSDLLTEAIKEKRRFDLIVSNPPYIREDVIETLMDDVKKYEPFEALCGGKDGLFFYEGIIKQSLEVLNDGGTIAFEIGYDQKIQVSHILNEYGFKDVLCIKDLAGKDRVIKARKY.

D143 and N189 together coordinate S-adenosyl-L-methionine. A substrate-binding site is contributed by 189-192 (NPPY).

Belongs to the protein N5-glutamine methyltransferase family. PrmC subfamily.

It carries out the reaction L-glutaminyl-[peptide chain release factor] + S-adenosyl-L-methionine = N(5)-methyl-L-glutaminyl-[peptide chain release factor] + S-adenosyl-L-homocysteine + H(+). In terms of biological role, methylates the class 1 translation termination release factors RF1/PrfA and RF2/PrfB on the glutamine residue of the universally conserved GGQ motif. In Clostridium botulinum (strain Hall / ATCC 3502 / NCTC 13319 / Type A), this protein is Release factor glutamine methyltransferase.